A 156-amino-acid polypeptide reads, in one-letter code: MPRRGRVPRRAVLADPLYGNTKVTKLINQVMLDGKKSLAQRICYDAFEIIKNKTGKDPVEVFEQALKNVMPVLEVKARRVGGANYQVPVEVRPERRQTLGIRWLVNYARARSGKSMQEKLAAELIDAANNTGGAVKKREDTHKMAEANKAFAHYRW.

The protein belongs to the universal ribosomal protein uS7 family. Part of the 30S ribosomal subunit. Contacts proteins S9 and S11.

Its function is as follows. One of the primary rRNA binding proteins, it binds directly to 16S rRNA where it nucleates assembly of the head domain of the 30S subunit. Is located at the subunit interface close to the decoding center, probably blocks exit of the E-site tRNA. This Moorella thermoacetica (strain ATCC 39073 / JCM 9320) protein is Small ribosomal subunit protein uS7.